Reading from the N-terminus, the 368-residue chain is Flagellar P-ring protein 1 (368 aa).

Positions 1 to 24 are cleaved as a signal peptide; sequence MIFKQIRRLIAAALLAALSLPAAA.

It belongs to the FlgI family. In terms of assembly, the basal body constitutes a major portion of the flagellar organelle and consists of four rings (L,P,S, and M) mounted on a central rod.

It localises to the periplasm. The protein localises to the bacterial flagellum basal body. Assembles around the rod to form the L-ring and probably protects the motor/basal body from shearing forces during rotation. This is Flagellar P-ring protein 1 from Chromobacterium violaceum (strain ATCC 12472 / DSM 30191 / JCM 1249 / CCUG 213 / NBRC 12614 / NCIMB 9131 / NCTC 9757 / MK).